Consider the following 354-residue polypeptide: NADH-quinone oxidoreductase subunit H (354 aa).

A run of 8 helical transmembrane segments spans residues Ile22–Leu42, Tyr91–Phe111, Leu124–Ala144, Met168–Val188, Val203–Val223, Leu255–Phe275, Ile291–Ile311, and Leu326–Ile346.

The protein belongs to the complex I subunit 1 family. In terms of assembly, NDH-1 is composed of 14 different subunits. Subunits NuoA, H, J, K, L, M, N constitute the membrane sector of the complex.

It localises to the cell inner membrane. It catalyses the reaction a quinone + NADH + 5 H(+)(in) = a quinol + NAD(+) + 4 H(+)(out). NDH-1 shuttles electrons from NADH, via FMN and iron-sulfur (Fe-S) centers, to quinones in the respiratory chain. The immediate electron acceptor for the enzyme in this species is believed to be ubiquinone. Couples the redox reaction to proton translocation (for every two electrons transferred, four hydrogen ions are translocated across the cytoplasmic membrane), and thus conserves the redox energy in a proton gradient. This subunit may bind ubiquinone. The chain is NADH-quinone oxidoreductase subunit H from Cupriavidus pinatubonensis (strain JMP 134 / LMG 1197) (Cupriavidus necator (strain JMP 134)).